A 787-amino-acid polypeptide reads, in one-letter code: Probable phosphoketolase (787 aa).

The protein belongs to the XFP family. It depends on thiamine diphosphate as a cofactor.

This Pediococcus pentosaceus (strain ATCC 25745 / CCUG 21536 / LMG 10740 / 183-1w) protein is Probable phosphoketolase.